We begin with the raw amino-acid sequence, 367 residues long: DNA replication and repair protein RecF (367 aa).

Residue 30–37 (GANGSGKT) coordinates ATP.

The protein belongs to the RecF family.

It is found in the cytoplasm. The RecF protein is involved in DNA metabolism; it is required for DNA replication and normal SOS inducibility. RecF binds preferentially to single-stranded, linear DNA. It also seems to bind ATP. The sequence is that of DNA replication and repair protein RecF from Pseudomonas entomophila (strain L48).